Consider the following 623-residue polypeptide: Interferon-induced GTP-binding protein Mx3 (623 aa).

A Dynamin-type G domain is found at 31 to 304 (DLALPAIAVI…LVHHIEKSLP (274 aa)). A G1 motif region spans residues 41–48 (GDQSSGKS). A GTP-binding site is contributed by 41–48 (GDQSSGKS). The interval 66 to 68 (VTR) is G2 motif. Residues 142 to 145 (DLPG) are G3 motif. Residues 142–146 (DLPGI) and 211–214 (TKPD) contribute to the GTP site. The tract at residues 211–214 (TKPD) is G4 motif. A G5 motif region spans residues 243–246 (KCRG). The GED domain occupies 537–623 (LQEMMLHLKS…MKARSYLVEF (87 aa)).

It belongs to the TRAFAC class dynamin-like GTPase superfamily. Dynamin/Fzo/YdjA family.

It is found in the cytoplasm. Its function is as follows. Does not inhibit strain RB-1 of the fish pathogen, infectious hematopoietic necrosis virus (IHNV). The chain is Interferon-induced GTP-binding protein Mx3 from Oncorhynchus mykiss (Rainbow trout).